A 222-amino-acid polypeptide reads, in one-letter code: uncharacterized protein (222 aa).

This sequence belongs to the ycf73 family.

It localises to the plastid. Its subcellular location is the chloroplast. This is an uncharacterized protein from Oryza nivara (Indian wild rice).